The following is a 331-amino-acid chain: Ornithine lipid hydroxylase OlsE (331 aa).

The next 5 membrane-spanning stretches (helical) occupy residues 13-33 (VSSLLWPAILCAGLTGAYFAF), 37-57 (MHLLWFNVVYLSTVAIIALFE), 85-105 (GGVQIAAAIGTSFPMAVATVA), 120-140 (WPMAFQVVLGLVIAEFGLYMA), and 189-209 (LLGAPLPVFLWIGAVTAFIGL). The Fatty acid hydroxylase domain occupies 126–260 (VVLGLVIAEF…LVIWDQLLGT (135 aa)).

The protein belongs to the sterol desaturase family.

It localises to the cell inner membrane. The protein operates within lipid metabolism. Functionally, involved in the biosynthesis of ornithine lipids (OLs), which are phosphorus-free membrane lipids. Is responsible for the hydroxylation of OL within the ornithine moiety. The chain is Ornithine lipid hydroxylase OlsE from Rhizobium tropici.